The primary structure comprises 330 residues: Phosphate acyltransferase (330 aa).

The protein belongs to the PlsX family. In terms of assembly, homodimer. Probably interacts with PlsY.

The protein resides in the cytoplasm. The enzyme catalyses a fatty acyl-[ACP] + phosphate = an acyl phosphate + holo-[ACP]. The protein operates within lipid metabolism; phospholipid metabolism. Functionally, catalyzes the reversible formation of acyl-phosphate (acyl-PO(4)) from acyl-[acyl-carrier-protein] (acyl-ACP). This enzyme utilizes acyl-ACP as fatty acyl donor, but not acyl-CoA. The chain is Phosphate acyltransferase from Streptococcus pneumoniae (strain ATCC 700669 / Spain 23F-1).